Consider the following 441-residue polypeptide: uncharacterized protein (441 aa).

This is an uncharacterized protein from Methanocaldococcus jannaschii (strain ATCC 43067 / DSM 2661 / JAL-1 / JCM 10045 / NBRC 100440) (Methanococcus jannaschii).